A 374-amino-acid chain; its full sequence is Cell division protein DivIB (374 aa).

The segment at 1–90 is disordered; it reads MWKISNENDI…EEEHFADRLP (90 aa). Topologically, residues 1-103 are cytoplasmic; sequence MWKISNENDI…KTRNKRLYRR (103 aa). Positions 39–53 are enriched in basic and acidic residues; the sequence is YLKKQAEEAASKGEN. Residues 56 to 75 are compositionally biased toward polar residues; that stretch reads AEVTITLQEQSQEEPQQHLP. A helical transmembrane segment spans residues 104–124; it reads LAFILTCLGTAILVALYFVSP. At 125 to 374 the chain is on the extracellular side; it reads LSRLSEVTVS…GENQEVQQAE (250 aa). The region spanning 126–197 is the POTRA domain; the sequence is SRLSEVTVSG…NSFKIDIQEY (72 aa). The segment at 325–374 is disordered; the sequence is KESEETGSEVSEDSAVENQEVVDPNAGVATDEANNGTPTNGENQEVQQAE. Over residues 326-339 the composition is skewed to acidic residues; sequence ESEETGSEVSEDSA. A compositionally biased stretch (polar residues) spans 356-374; it reads EANNGTPTNGENQEVQQAE.

Belongs to the FtsQ/DivIB family. DivIB subfamily.

Its subcellular location is the cell membrane. Functionally, cell division protein that may be involved in stabilizing or promoting the assembly of the division complex. The chain is Cell division protein DivIB from Enterococcus faecalis (strain ATCC 700802 / V583).